A 5635-amino-acid polypeptide reads, in one-letter code: MISWEVVHTVFLFALLYSSLAQDASPQSEIRAEEIPEGASTLAFVFDVTGSMYDDLVQVIEGASKILETSLKRPKRPLFNFALVPFHDPEIGPVTITTDPKKFQYELRELYVQGGGDCPEMSIGAIKIALEISLPGSFIYVFTDARSKDYRLTHEVLQLIQQKQSQVVFVLTGDCDDRTHIGYKVYEEIASTSSGQVFHLDKKQVNEVLKWVEEAVQASKVHLLSTDHLEQAVNTWRIPFDPSLKEVTVSLSGPSPMIEIRNPLGKLIKKGFGLHELLNIHNSAKVVNVKEPEAGMWTVKTSSSGRHSVRITGLSTIDFRAGFSRKPTLDFKKTVSRPVQGIPTYVLLNTSGISTPARIDLLELLSISGSSLKTIPVKYYPHRKPYGIWNISDFVPPNEAFFLKVTGYDKDDYLFQRVSSVSFSSIVPDAPKVTMPEKTPGYYLQPGQIPCSVDSLLPFTLSFVRNGVTLGVDQYLKESASVNLDIAKVTLSDEGFYECIAVSSAGTGRAQTFFDVSEPPPVIQVPNNVTVTPGERAVLTCLIISAVDYNLTWQRNDRDVRLAEPARIRTLANLSLELKSVKFNDAGEYHCMVSSEGGSSAASVFLTVQEPPKVTVMPKNQSFTGGSEVSIMCSATGYPKPKIAWTVNDMFIVGSHRYRMTSDGTLFIKNAAPKDAGIYGCLASNSAGTDKQNSTLRYIEAPKLMVVQSELLVALGDITVMECKTSGIPPPQVKWFKGDLELRPSTFLIIDPLLGLLKIQETQDLDAGDYTCVAINEAGRATGKITLDVGSPPVFIQEPADVSMEIGSNVTLPCYVQGYPEPTIKWRRLDNMPIFSRPFSVSSISQLRTGALFILNLWASDKGTYICEAENQFGKIQSETTVTVTGLVAPLIGISPSVANVIEGQQLTLPCTLLAGNPIPERRWIKNSAMLLQNPYITVRSDGSLHIERVQLQDGGEYTCVASNVAGTNNKTTSVVVHVLPTIQHGQQILSTIEGIPVTLPCKASGNPKPSVIWSKKGELISTSSAKFSAGADGSLYVVSPGGEESGEYVCTATNTAGYAKRKVQLTVYVRPRVFGDQRGLSQDKPVEISVLAGEEVTLPCEVKSLPPPIITWAKETQLISPFSPRHTFLPSGSMKITETRTSDSGMYLCVATNIAGNVTQAVKLNVHVPPKIQRGPKHLKVQVGQRVDIPCNAQGTPLPVITWSKGGSTMLVDGEHHVSNPDGTLSIDQATPSDAGIYTCVATNIAGTDETEITLHVQEPPTVEDLEPPYNTTFQERVANQRIEFPCPAKGTPKPTIKWLHNGRELTGREPGISILEDGTLLVIASVTPYDNGEYICVAVNEAGTTERKYNLKVHVPPVIKDKEQVTNVSVLLNQLTNLFCEVEGTPSPIIMWYKDNVQVTESSTIQTVNNGKILKLFRATPEDAGRYSCKAINIAGTSQKYFNIDVLVPPTIIGTNFPNEVSVVLNRDVALECQVKGTPFPDIHWFKDGKPLFLGDPNVELLDRGQVLHLKNARRNDKGRYQCTVSNAAGKQAKDIKLTIYIPPSIKGGNVTTDISVLINSLIKLECETRGLPMPAITWYKDGQPIMSSSQALYIDKGQYLHIPRAQVSDSATYTCHVANVAGTAEKSFHVDVYVPPMIEGNLATPLNKQVVIAHSLTLECKAAGNPSPILTWLKDGVPVKANDNIRIEAGGKKLEIMSAQEIDRGQYICVATSVAGEKEIKYEVDVLVPPAIEGGDETSYFIVMVNNLLELDCHVTGSPPPTIMWLKDGQLIDERDGFKILLNGRKLVIAQAQVSNTGLYRCMAANTAGDHKKEFEVTVHVPPTIKSSGLSERVVVKYKPVALQCIANGIPNPSITWLKDDQPVNTAQGNLKIQSSGRVLQIAKTLLEDAGRYTCVATNAAGETQQHIQLHVHEPPSLEDAGKMLNETVLVSNPVQLECKAAGNPVPVITWYKDNRLLSGSTSMTFLNRGQIIDIESAQISDAGIYKCVAINSAGATELFYSLQVHVAPSISGSNNMVAVVVNNPVRLECEARGIPAPSLTWLKDGSPVSSFSNGLQVLSGGRILALTSAQISDTGRYTCVAVNAAGEKQRDIDLRVYVPPNIMGEEQNVSVLISQAVELLCQSDAIPPPTLTWLKDGHPLLKKPGLSISENRSVLKIEDAQVQDTGRYTCEATNVAGKTEKNYNVNIWVPPNIGGSDELTQLTVIEGNLISLLCESSGIPPPNLIWKKKGSPVLTDSMGRVRILSGGRQLQISIAEKSDAALYSCVASNVAGTAKKEYNLQVYIRPTITNSGSHPTEIIVTRGKSISLECEVQGIPPPTVTWMKDGHPLIKAKGVEILDEGHILQLKNIHVSDTGRYVCVAVNVAGMTDKKYDLSVHAPPSIIGNHRSPENISVVEKNSVSLTCEASGIPLPSITWFKDGWPVSLSNSVRILSGGRMLRLMQTTMEDAGQYTCVVRNAAGEERKIFGLSVLVPPHIVGENTLEDVKVKEKQSVTLTCEVTGNPVPEITWHKDGQPLQEDEAHHIISGGRFLQITNVQVPHTGRYTCLASSPAGHKSRSFSLNVFVSPTIAGVGSDGNPEDVTVILNSPTSLVCEAYSYPPATITWFKDGTPLESNRNIRILPGGRTLQILNAQEDNAGRYSCVATNEAGEMIKHYEVKVYIPPIINKGDLWGPGLSPKEVKIKVNNTLTLECEAYAIPSASLSWYKDGQPLKSDDHVNIAANGHTLQIKEAQISDTGRYTCVASNIAGEDELDFDVNIQVPPSFQKLWEIGNMLDTGRNGEAKDVIINNPISLYCETNAAPPPTLTWYKDGHPLTSSDKVLILPGGRVLQIPRAKVEDAGRYTCVAVNEAGEDSLQYDVRVLVPPIIKGANSDLPEEVTVLVNKSALIECLSSGSPAPRNSWQKDGQPLLEDDHHKFLSNGRILQILNTQITDIGRYVCVAENTAGSAKKYFNLNVHVPPSVIGPKSENLTVVVNNFISLTCEVSGFPPPDLSWLKNEQPIKLNTNTLIVPGGRTLQIIRAKVSDGGEYTCIAINQAGESKKKFSLTVYVPPSIKDHDSESLSVVNVREGTSVSLECESNAVPPPVITWYKNGRMITESTHVEILADGQMLHIKKAEVSDTGQYVCRAINVAGRDDKNFHLNVYVPPSIEGPEREVIVETISNPVTLTCDATGIPPPTIAWLKNHKRIENSDSLEVRILSGGSKLQIARSQHSDSGNYTCIASNMEGKAQKYYFLSIQVPPSVAGAEIPSDVSVLLGENVELVCNANGIPTPLIQWLKDGKPIASGETERIRVSANGSTLNIYGALTSDTGKYTCVATNPAGEEDRIFNLNVYVTPTIRGNKDEAEKLMTLVDTSINIECRATGTPPPQINWLKNGLPLPLSSHIRLLAAGQVIRIVRAQVSDVAVYTCVASNRAGVDNKHYNLQVFAPPNMDNSMGTEEITVLKGSSTSMACITDGTPAPSMAWLRDGQPLGLDAHLTVSTHGMVLQLLKAETEDSGKYTCIASNEAGEVSKHFILKVLEPPHINGSEEHEEISVIVNNPLELTCIASGIPAPKMTWMKDGRPLPQTDQVQTLGGGEVLRISTAQVEDTGRYTCLASSPAGDDDKEYLVRVHVPPNIAGTDEPRDITVLRNRQVTLECKSDAVPPPVITWLRNGERLQATPRVRILSGGRYLQINNADLGDTANYTCVASNIAGKTTREFILTVNVPPNIKGGPQSLVILLNKSTVLECIAEGVPTPRITWRKDGAVLAGNHARYSILENGFLHIQSAHVTDTGRYLCMATNAAGTDRRRIDLQVHVPPSIAPGPTNMTVIVNVQTTLACEATGIPKPSINWRKNGHLLNVDQNQNSYRLLSSGSLVIISPSVDDTATYECTVTNGAGDDKRTVDLTVQVPPSIADEPTDFLVTKHAPAVITCTASGVPFPSIHWTKNGIRLLPRGDGYRILSSGAIEILATQLNHAGRYTCVARNAAGSAHRHVTLHVHEPPVIQPQPSELHVILNNPILLPCEATGTPSPFITWQKEGINVNTSGRNHAVLPSGGLQISRAVREDAGTYMCVAQNPAGTALGKIKLNVQVPPVISPHLKEYVIAVDKPITLSCEADGLPPPDITWHKDGRAIVESIRQRVLSSGSLQIAFVQPGDAGHYTCMAANVAGSSSTSTKLTVHVPPRIRSTEGHYTVNENSQAILPCVADGIPTPAINWKKDNVLLANLLGKYTAEPYGELILENVVLEDSGFYTCVANNAAGEDTHTVSLTVHVLPTFTELPGDVSLNKGEQLRLSCKATGIPLPKLTWTFNNNIIPAHFDSVNGHSELVIERVSKEDSGTYVCTAENSVGFVKAIGFVYVKEPPVFKGDYPSNWIEPLGGNAILNCEVKGDPTPTIQWNRKGVDIEISHRIRQLGNGSLAIYGTVNEDAGDYTCVATNEAGVVERSMSLTLQSPPIITLEPVETVINAGGKIILNCQATGEPQPTITWSRQGHSISWDDRVNVLSNNSLYIADAQKEDTSEFECVARNLMGSVLVRVPVIVQVHGGFSQWSAWRACSVTCGKGIQKRSRLCNQPLPANGGKPCQGSDLEMRNCQNKPCPVDGSWSEWSLWEECTRSCGRGNQTRTRTCNNPSVQHGGRPCEGNAVEIIMCNIRPCPVHGAWSAWQPWGTCSESCGKGTQTRARLCNNPPPAFGGSYCDGAETQMQVCNERNCPIHGKWATWASWSACSVSCGGGARQRTRGCSDPVPQYGGRKCEGSDVQSDFCNSDPCPTHGNWSPWSGWGTCSRTCNGGQMRRYRTCDNPPPSNGGRACGGPDSQIQRCNTDMCPVDGSWGSWHSWSQCSASCGGGEKTRKRLCDHPVPVKGGRPCPGDTTQVTRCNVQACPGGPQRARGSVIGNINDVEFGIAFLNATITDSPNSDTRIIRAKITNVPRSLGSAMRKIVSILNPIYWTTAKEIGEAVNGFTLTNAVFKRETQVEFATGEILQMSHIARGLDSDGSLLLDIVVSGYVLQLQSPAEVTVKDYTEDYIQTGPGQLYAYSTRLFTIDGISIPYTWNHTVFYDQAQGRMPFLVETLHASSVESDYNQIEETLGFKIHASISKGDRSNQCPSGFTLDSVGPFCADEDECAAGNPCSHSCHNAMGTYYCSCPKGLTIAADGRTCQDIDECALGRHTCHAGQDCDNTIGSYRCVVRCGSGFRRTSDGLSCQDINECQESSPCHQRCFNAIGSFHCGCEPGYQLKGRKCMDVNECRQNVCRPDQHCKNTRGGYKCIDLCPNGMTKAENGTCIDIDECKDGTHQCRYNQICENTRGSYRCVCPRGYRSQGVGRPCMDINECEQVPKPCAHQCSNTPGSFKCICPPGQHLLGDGKSCAGLERLPNYGTQYSSYNLARFSPVRNNYQPQQHYRQYSHLYSSYSEYRNSRTSLSRTRRTIRKTCPEGSEASHDTCVDIDECENTDACQHECKNTFGSYQCICPPGYQLTHNGKTCQDIDECLEQNVHCGPNRMCFNMRGSYQCIDTPCPPNYQRDPVSGFCLKNCPPNDLECALSPYALEYKLVSLPFGIATNQDLIRLVAYTQDGVMHPRTTFLMVDEEQTVPFALRDENLKGVVYTTRPLREAETYRMRVRASSYSANGTIEYQTTFIVYIAVSAYPY.

Residues 1-21 (MISWEVVHTVFLFALLYSSLA) form the signal peptide. Residues 41-216 (TLAFVFDVTG…EVLKWVEEAV (176 aa)) form the VWFA domain. N-linked (GlcNAc...) asparagine glycans are attached at residues Asn-349 and Asn-390. Ig-like C2-type domains follow at residues 431–517 (PKVT…FDVS), 520–607 (PPVI…VFLT), 612–697 (PKVT…STLR), 702–788 (PKLM…ITLD), 793–883 (PVFI…TTVT), 890–976 (PLIG…TSVV), 981–1067 (PTIQ…VQLT), 1072–1166 (PRVF…VKLN), 1171–1255 (PKIQ…TEIT), 1262–1354 (PTVE…YNLK), 1358–1447 (PPVI…FNID), 1452–1541 (PTII…IKLT), 1546–1634 (PSIK…FHVD), 1638–1724 (PPMI…KEIK), 1733–1821 (PAIE…FEVT), 1826–1914 (PTIK…IQLH), 1919–2007 (PSLE…YSLQ), 2012–2097 (PSIS…RDID), 2104–2190 (PNIM…YNVN), 2195–2285 (PNIG…YNLQ), 2290–2379 (PTIT…YDLS), 2384–2470 (PSII…RKIF), 2478–2564 (PHIV…RSFS), 2571–2662 (PTIA…YEVK), 2666–2763 (PPII…VNIQ), 2766–2864 (PSFQ…YDVR), 2868–2959 (PPII…FNLN), 2964–3051 (PSVI…FSLT), 3056–3146 (PSIK…FHLN), 3151–3240 (PSIE…YFLS), 3245–3335 (PSVA…FNLN), 3340–3429 (PTIR…YNLQ), 3434–3516 (PNMD…GEVS), 3527–3615 (PHIN…YLVR), 3620–3708 (PNIA…FILT), 3713–3797 (PNIK…RRID), 3804–3892 (PSIA…VDLT), 3897–3983 (PSIA…VTLH), 3988–4076 (PVIQ…LNVQ), 4079–4164 (PVIS…TKLT), 4169–4255 (PRIR…VSLT), 4260–4344 (PTFT…GFVY), 4348–4435 (PPVF…MSLT), and 4440–4527 (PIIT…VIVQ). A disulfide bridge connects residues Cys-451 and Cys-499. Residues Asn-528, Asn-550, Asn-573, and Asn-620 are each glycosylated (N-linked (GlcNAc...) asparagine). Cysteines 541 and 591 form a disulfide. Cysteines 633 and 681 form a disulfide. An N-linked (GlcNAc...) asparagine glycan is attached at Asn-693. Cys-723 and Cys-772 are disulfide-bonded. Asn-809 carries an N-linked (GlcNAc...) asparagine glycan. 2 cysteine pairs are disulfide-bonded: Cys-814–Cys-867 and Cys-911–Cys-960. N-linked (GlcNAc...) asparagine glycosylation is present at Asn-970. Intrachain disulfides connect Cys-1002-Cys-1051 and Cys-1101-Cys-1150. Residue Asn-1158 is glycosylated (N-linked (GlcNAc...) asparagine). An intrachain disulfide couples Cys-1192 to Cys-1241. An N-linked (GlcNAc...) asparagine glycan is attached at Asn-1272. An intrachain disulfide couples Cys-1288 to Cys-1338. N-linked (GlcNAc...) asparagine glycosylation occurs at Asn-1369. 2 cysteine pairs are disulfide-bonded: Cys-1382–Cys-1431 and Cys-1475–Cys-1525. The N-linked (GlcNAc...) asparagine glycan is linked to Asn-1552. 4 cysteine pairs are disulfide-bonded: Cys-1569–Cys-1618, Cys-1663–Cys-1712, Cys-1756–Cys-1805, and Cys-1848–Cys-1898. N-linked (GlcNAc...) asparagine glycosylation occurs at Asn-1929. Disulfide bonds link Cys-1942/Cys-1991 and Cys-2033/Cys-2083. Residues Asn-2112 and Asn-2155 are each glycosylated (N-linked (GlcNAc...) asparagine). 3 disulfide bridges follow: Cys-2125-Cys-2174, Cys-2218-Cys-2269, and Cys-2314-Cys-2363. N-linked (GlcNAc...) asparagine glycosylation is present at Asn-2395. 3 disulfides stabilise this stretch: Cys-2408-Cys-2457, Cys-2501-Cys-2550, and Cys-2597-Cys-2646. Asn-2689 carries an N-linked (GlcNAc...) asparagine glycan. 2 disulfides stabilise this stretch: Cys-2696-Cys-2745 and Cys-2799-Cys-2848. The N-linked (GlcNAc...) asparagine glycan is linked to Asn-2887. Cys-2894 and Cys-2943 are joined by a disulfide. Asn-2973 carries N-linked (GlcNAc...) asparagine glycosylation. Intrachain disulfides connect Cys-2986–Cys-3035, Cys-3081–Cys-3130, Cys-3173–Cys-3224, Cys-3268–Cys-3319, Cys-3364–Cys-3413, and Cys-3457–Cys-3506. Asn-3221 and Asn-3300 each carry an N-linked (GlcNAc...) asparagine glycan. An N-linked (GlcNAc...) asparagine glycan is attached at Asn-3530. 2 cysteine pairs are disulfide-bonded: Cys-3550-Cys-3599 and Cys-3643-Cys-3692. 2 N-linked (GlcNAc...) asparagine glycosylation sites follow: Asn-3689 and Asn-3727. A disulfide bridge connects residues Cys-3734 and Cys-3783. N-linked (GlcNAc...) asparagine glycosylation is present at Asn-3812. 26 disulfides stabilise this stretch: Cys-3825/Cys-3876, Cys-3918/Cys-3967, Cys-4009/Cys-4058, Cys-4100/Cys-4148, Cys-4190/Cys-4239, Cys-4281/Cys-4328, Cys-4371/Cys-4419, Cys-4461/Cys-4509, Cys-4541/Cys-4578, Cys-4545/Cys-4583, Cys-4556/Cys-4568, Cys-4598/Cys-4635, Cys-4602/Cys-4640, Cys-4613/Cys-4625, Cys-4655/Cys-4692, Cys-4659/Cys-4697, Cys-4670/Cys-4682, Cys-4712/Cys-4749, Cys-4716/Cys-4754, Cys-4727/Cys-4739, Cys-4769/Cys-4806, Cys-4773/Cys-4811, Cys-4784/Cys-4796, Cys-4826/Cys-4863, Cys-4830/Cys-4868, and Cys-4841/Cys-4853. Asn-4029 carries N-linked (GlcNAc...) asparagine glycosylation. N-linked (GlcNAc...) asparagine glycans are attached at residues Asn-4401 and Asn-4491. 6 TSP type-1 domains span residues 4529–4584 (HGGF…KPCP), 4586–4641 (DGSW…RPCP), 4643–4698 (HGAW…RNCP), 4700–4755 (HGKW…DPCP), 4757–4812 (HGNW…DMCP), and 4814–4869 (DGSW…QACP). Asn-4606 carries an N-linked (GlcNAc...) asparagine glycan. The 223-residue stretch at 4871 to 5093 (GPQRARGSVI…SKGDRSNQCP (223 aa)) folds into the Nidogen G2 beta-barrel domain. N-linked (GlcNAc...) asparagine glycans are attached at residues Asn-4894 and Asn-5040. An EGF-like 1; calcium-binding domain is found at 5107-5146 (DEDECAAGNPCSHSCHNAMGTYYCSCPKGLTIAADGRTCQ). 3 cysteine pairs are disulfide-bonded: Cys-5111-Cys-5121, Cys-5117-Cys-5130, and Cys-5132-Cys-5145. Residues 5147–5191 (DIDECALGRHTCHAGQDCDNTIGSYRCVVRCGSGFRRTSDGLSCQ) form the EGF-like 2; calcium-binding domain. An EGF-like 3; calcium-binding domain is found at 5192–5229 (DINECQESSPCHQRCFNAIGSFHCGCEPGYQLKGRKCM). Intrachain disulfides connect Cys-5196–Cys-5206, Cys-5202–Cys-5215, and Cys-5217–Cys-5228. One can recognise an EGF-like 4; calcium-binding domain in the interval 5230–5271 (DVNECRQNVCRPDQHCKNTRGGYKCIDLCPNGMTKAENGTCI). Residue Asn-5267 is glycosylated (N-linked (GlcNAc...) asparagine). Residues 5272-5307 (DIDECKDGTHQCRYNQICENTRGSYRCVCPRGYRSQ) enclose the EGF-like 5; calcium-binding domain. 8 disulfides stabilise this stretch: Cys-5276–Cys-5289, Cys-5283–Cys-5298, Cys-5319–Cys-5330, Cys-5326–Cys-5339, Cys-5341–Cys-5354, Cys-5436–Cys-5446, Cys-5442–Cys-5455, and Cys-5457–Cys-5470. An EGF-like 6; calcium-binding domain is found at 5315–5355 (DINECEQVPKPCAHQCSNTPGSFKCICPPGQHLLGDGKSCA). Residues 5432 to 5471 (DIDECENTDACQHECKNTFGSYQCICPPGYQLTHNGKTCQ) enclose the EGF-like 7; calcium-binding domain. Asn-5615 carries N-linked (GlcNAc...) asparagine glycosylation.

In terms of tissue distribution, expressed in hair follicles and in the dermis (at protein level). As to expression, expressed in skin fibroblasts and retinal pigment epithelium (RPE) cells.

It localises to the secreted. The protein resides in the extracellular space. Its subcellular location is the extracellular matrix. It is found in the basement membrane. The protein localises to the cytoplasm. It localises to the cell junction. The protein resides in the cleavage furrow. Involved in transforming growth factor beta-mediated rearrangement of the podocyte cytoskeleton which includes reduction of F-actin fibers and broadening, flattening and elongation of podocytes. Plays a role in basement membrane organization. May promote cleavage furrow maturation during cytokinesis in preimplantation embryos. May play a role in the architecture of adhesive and flexible epithelial cell junctions. May play a role during myocardial remodeling by imparting an effect on cardiac fibroblast migration. This is Hemicentin-1 (HMCN1) from Homo sapiens (Human).